Here is a 138-residue protein sequence, read N- to C-terminus: 10 kDa chaperonin 1, chloroplastic (138 aa).

Residues 1–61 constitute a chloroplast transit peptide; the sequence is MASSFITVPK…VPQADRVLVR (61 aa). Residues 50-137 are cpn-10 domain; that stretch reads KVVPQADRVL…CKESDLLAIV (88 aa).

This sequence belongs to the GroES chaperonin family. Expressed at low levels in germinating seeds, seedlings, rosettes leaves, flowers and siliques.

It is found in the plastid. Its subcellular location is the chloroplast. Functionally, functions as a co-chaperone for protein folding in chloroplasts. In Arabidopsis thaliana (Mouse-ear cress), this protein is 10 kDa chaperonin 1, chloroplastic.